The primary structure comprises 344 residues: Meiotic recombination protein DMC1 homolog B (344 aa).

133-140 (GEFRSGKT) is a binding site for ATP. Residue R235 participates in dsDNA binding. SsDNA is bound by residues R235, F238, R241, R247, and R315. R241 and R247 together coordinate dsDNA.

The protein belongs to the RecA family. DMC1 subfamily. As to expression, highly expressed in spikelets. Expressed in meiotic young panicles.

It localises to the nucleus. In terms of biological role, recombinase that may participate in meiotic recombination, specifically in homologous strand assimilation, which is required for the resolution of meiotic double-strand breaks. Exhibits DNA-dependent ATPase activity when bound to single-stranded DNA (ssDNA). Mediates renaturation of homologous complementary strands as well as assimilation of single strands into homologous supercoiled duplexes leading to D-loop formation. Binds circular single-stranded DNA (ssDNA) and circular double-stranded DNA (dsDNA) in vitro. Catalyzes DNA homologous renaturation and DNA strand exchange. The rates of these activities are dependent on the state of ATP hydrolysis. Forms helical filaments along ssDNA and dsDNA, and promotes strand exchange between ssDNA and dsDNA with long DNA substrates of several thousand base pairs. The presence of the replication protein A is not required for this activity. Seems to be required for homologous pairing and subsequent chromosome segregation during male meiosis. May be not directly required for homologous pairing during male meiosis. Required for synaptonemal complex assembly and crossover formation. Functions redundantly with DMC1A. The polypeptide is Meiotic recombination protein DMC1 homolog B (Oryza sativa subsp. japonica (Rice)).